Here is a 423-residue protein sequence, read N- to C-terminus: Gamma-glutamyl phosphate reductase (423 aa).

This sequence belongs to the gamma-glutamyl phosphate reductase family.

The protein resides in the cytoplasm. The catalysed reaction is L-glutamate 5-semialdehyde + phosphate + NADP(+) = L-glutamyl 5-phosphate + NADPH + H(+). It functions in the pathway amino-acid biosynthesis; L-proline biosynthesis; L-glutamate 5-semialdehyde from L-glutamate: step 2/2. In terms of biological role, catalyzes the NADPH-dependent reduction of L-glutamate 5-phosphate into L-glutamate 5-semialdehyde and phosphate. The product spontaneously undergoes cyclization to form 1-pyrroline-5-carboxylate. The chain is Gamma-glutamyl phosphate reductase from Burkholderia orbicola (strain MC0-3).